Consider the following 386-residue polypeptide: MISRNSILLRRLYPTTIIRTLATDATESTSVKTKRRRTIFTDELNKGPSFDDFVSGKAKDMLEDPLETARKDPNAKLPSWLKVPIPKGKSFHNVKKDVRELKLATVCEEAKCPNIGECWGGKKSEATATIMLLGDTCTRGCRFCSVKTNRKPAAPDPMEPENTAEAISRWGLGYVVLTTVDRDDLVDGGARHLAETVQKIKQKAPQILVEVLGGDFRGDLSMVEILADSGLDVYAHNLETVEALTPHIRDRRATYRQSLAVLERAKQTNSSLITKTSLMLGFGETDDQVLQTLRDLREIGCDVVTFGQYMRPTKRHMKVVEYIKPEKFDYWRDTALDMGFLYVASGPLVRSSYKAGEAFIENVLKKRKHNVGETPRLAQEIKPSIY.

The transit peptide at 1 to 21 (MISRNSILLRRLYPTTIIRTL) directs the protein to the mitochondrion. [4Fe-4S] cluster contacts are provided by Cys107, Cys112, Cys118, Cys137, Cys141, Cys144, and Ser352. Residues 122–341 (KKSEATATIM…RDTALDMGFL (220 aa)) form the Radical SAM core domain.

Belongs to the radical SAM superfamily. Lipoyl synthase family. It depends on [4Fe-4S] cluster as a cofactor.

The protein localises to the mitochondrion. It carries out the reaction [[Fe-S] cluster scaffold protein carrying a second [4Fe-4S](2+) cluster] + N(6)-octanoyl-L-lysyl-[protein] + 2 oxidized [2Fe-2S]-[ferredoxin] + 2 S-adenosyl-L-methionine + 4 H(+) = [[Fe-S] cluster scaffold protein] + N(6)-[(R)-dihydrolipoyl]-L-lysyl-[protein] + 4 Fe(3+) + 2 hydrogen sulfide + 2 5'-deoxyadenosine + 2 L-methionine + 2 reduced [2Fe-2S]-[ferredoxin]. The protein operates within protein modification; protein lipoylation via endogenous pathway; protein N(6)-(lipoyl)lysine from octanoyl-[acyl-carrier-protein]: step 2/2. In terms of biological role, catalyzes the radical-mediated insertion of two sulfur atoms into the C-6 and C-8 positions of the octanoyl moiety bound to the lipoyl domains of lipoate-dependent enzymes, thereby converting the octanoylated domains into lipoylated derivatives. The sequence is that of Lipoyl synthase, mitochondrial (LAB5) from Candida albicans (strain SC5314 / ATCC MYA-2876) (Yeast).